Here is a 282-residue protein sequence, read N- to C-terminus: Chorismate dehydratase (282 aa).

This sequence belongs to the MqnA/MqnD family. MqnA subfamily.

It catalyses the reaction chorismate = 3-[(1-carboxyvinyl)-oxy]benzoate + H2O. It functions in the pathway quinol/quinone metabolism; menaquinone biosynthesis. In terms of biological role, catalyzes the dehydration of chorismate into 3-[(1-carboxyvinyl)oxy]benzoate, a step in the biosynthesis of menaquinone (MK, vitamin K2). The sequence is that of Chorismate dehydratase from Streptomyces coelicolor (strain ATCC BAA-471 / A3(2) / M145).